The following is a 220-amino-acid chain: Ribonuclease P protein subunit p29 (220 aa).

At Ser-10 the chain carries Phosphoserine.

This sequence belongs to the eukaryotic/archaeal RNase P protein component 1 family. In terms of assembly, component of nuclear RNase P and RNase MRP ribonucleoproteins. RNase P consists of a catalytic RNA moiety and 10 different protein chains; POP1, POP4, POP5, POP7, RPP14, RPP21, RPP25, RPP30, RPP38 and RPP40. Within the RNase P complex, POP1, POP7 and RPP25 form the 'finger' subcomplex, POP5, RPP14, RPP40 and homodimeric RPP30 form the 'palm' subcomplex, and RPP21, POP4 and RPP38 form the 'wrist' subcomplex. All subunits of the RNase P complex interact with the catalytic RNA. Several subunits of RNase P are also part of the RNase MRP complex. RNase MRP consists of a catalytic RNA moiety and about 8 protein subunits; POP1, POP7, RPP25, RPP30, RPP38, RPP40 and possibly also POP4 and POP5.

The protein resides in the nucleus. It localises to the nucleolus. Its function is as follows. Component of ribonuclease P, a ribonucleoprotein complex that generates mature tRNA molecules by cleaving their 5'-ends. In Homo sapiens (Human), this protein is Ribonuclease P protein subunit p29 (POP4).